The following is a 63-amino-acid chain: UPF0370 protein PC1_1167 (63 aa).

A helical transmembrane segment spans residues 3–23 (WLADYWWIILIILIGMLINGI). The disordered stretch occupies residues 37-63 (NKPKLPPHRDNNDKWDDEDDDWPKKKP).

It belongs to the UPF0370 family.

The protein localises to the cell membrane. The sequence is that of UPF0370 protein PC1_1167 from Pectobacterium carotovorum subsp. carotovorum (strain PC1).